The chain runs to 101 residues: Large ribosomal subunit protein eL30 (101 aa).

The protein belongs to the eukaryotic ribosomal protein eL30 family.

The protein is Large ribosomal subunit protein eL30 (rpl30e) of Thermococcus celer.